Reading from the N-terminus, the 863-residue chain is Ubiquitin carboxyl-terminal hydrolase 13 (863 aa).

Serine 114 carries the phosphoserine; by AURKB modification. Threonine 122 bears the Phosphothreonine mark. A UBP-type; degenerate zinc finger spans residues 187–295 (PVSKYANNLT…KHLAHFGIDM (109 aa)). 4 residues coordinate Zn(2+): cysteine 211, cysteine 214, cysteine 231, and histidine 244. Lysine 311 participates in a covalent cross-link: Glycyl lysine isopeptide (Lys-Gly) (interchain with G-Cter in SUMO2). Residues 336 to 861 (TGLKNLGNSC…LGYMYFYRRI (526 aa)) enclose the USP domain. Catalysis depends on cysteine 345, which acts as the Nucleophile. Lysine 405 participates in a covalent cross-link: Glycyl lysine isopeptide (Lys-Gly) (interchain with G-Cter in SUMO2). UBA domains are found at residues 652-693 (DIDE…IIVH) and 727-767 (QPPE…IFSH). Histidine 823 functions as the Proton acceptor in the catalytic mechanism.

Belongs to the peptidase C19 family. Interacts with UFD1. Interacts (via UBA domains) with SIAH2 (when ubiquitinated). Interacts with BAG6; the interaction is direct and may mediate UBL4A deubiquitination. Interacts (via UBA 2 domain) with AMFR; the interaction is direct. Interacts with UBL4A; may be indirect via BAG6. Interacts with NEDD4. Phosphorylated by AURKB at Ser-114; leading to stabilization of cell cycle proteins such as SKP2 and AURKB, but not MCL1. Highly expressed in ovary and testes.

Its subcellular location is the cytoplasm. The enzyme catalyses Thiol-dependent hydrolysis of ester, thioester, amide, peptide and isopeptide bonds formed by the C-terminal Gly of ubiquitin (a 76-residue protein attached to proteins as an intracellular targeting signal).. Specifically inhibited by spautin-1 (specific and potent autophagy inhibitor-1), a derivative of MBCQ that binds to USP13 and inhibits deubiquitinase activity. Regulated by PIK3C3/VPS34-containing complexes. The weak deubiquitinase activity in vitro suggests the existence of some mechanism that activates the enzyme. In terms of biological role, deubiquitinase that mediates deubiquitination of target proteins such as BECN1, MITF, SKP2 and USP10 and is involved in various processes such as autophagy, endoplasmic reticulum-associated degradation (ERAD), cell cycle progression or DNA damage response. Component of a regulatory loop that controls autophagy and p53/TP53 levels: mediates deubiquitination of BECN1, a key regulator of autophagy, leading to stabilize the PIK3C3/VPS34-containing complexes. Alternatively, forms with NEDD4 a deubiquitination complex, which subsequently stabilizes VPS34 to promote autophagy. Also deubiquitinates USP10, an essential regulator of p53/TP53 stability. In turn, PIK3C3/VPS34-containing complexes regulate USP13 stability, suggesting the existence of a regulatory system by which PIK3C3/VPS34-containing complexes regulate p53/TP53 protein levels via USP10 and USP13. Recruited by nuclear UFD1 and mediates deubiquitination of SKP2, thereby regulating endoplasmic reticulum-associated degradation (ERAD). Also regulates ERAD through the deubiquitination of UBL4A a component of the BAG6/BAT3 complex. Mediates stabilization of SIAH2 independently of deubiquitinase activity: binds ubiquitinated SIAH2 and acts by impairing SIAH2 autoubiquitination. Regulates the cell cycle progression by stabilizing cell cycle proteins such as SKP2 and AURKB. In addition, plays an important role in maintaining genomic stability and in DNA replication checkpoint activation via regulation of RAP80 and TOPBP1. Deubiquitinates the multifunctional protein HMGB1 and subsequently drives its nucleocytoplasmic localization and its secretion. Positively regulates type I and type II interferon signalings by deubiquitinating STAT1 but negatively regulates antiviral response by deubiquitinating STING1. The chain is Ubiquitin carboxyl-terminal hydrolase 13 (USP13) from Homo sapiens (Human).